We begin with the raw amino-acid sequence, 913 residues long: Cadherin-4 (913 aa).

Positions 1 to 19 (MRTGSRLLLVLLVWGSAAA) are cleaved as a signal peptide. Positions 20–166 (LNGDLTVRPT…SAKGLRRQKR (147 aa)) are excised as a propeptide. Cadherin domains lie at 167–274 (DWVI…RPEF), 275–389 (INQV…PPEF), 390–504 (TTST…APYF), 505–610 (PTNH…DNAP), and 611–721 (ELLP…TIGA). Over 167–731 (DWVIPPINVP…VAAAGLGTGA (565 aa)) the chain is Extracellular. N-linked (GlcNAc...) asparagine glycosylation is found at asparagine 280, asparagine 409, asparagine 554, asparagine 629, asparagine 658, and asparagine 699. A helical transmembrane segment spans residues 732 to 753 (IIAILICIIILLTMVLLFVVWM). The Cytoplasmic segment spans residues 754–913 (KRREKERHTK…ADMYGGGEED (160 aa)).

Embryonic brain and neuronal retina.

It localises to the cell membrane. Cadherins are calcium-dependent cell adhesion proteins. They preferentially interact with themselves in a homophilic manner in connecting cells; cadherins may thus contribute to the sorting of heterogeneous cell types. May play an important role in retinal development. The protein is Cadherin-4 (CDH4) of Gallus gallus (Chicken).